Here is a 244-residue protein sequence, read N- to C-terminus: Cell division protein ZapD (244 aa).

This sequence belongs to the ZapD family. In terms of assembly, interacts with FtsZ.

It localises to the cytoplasm. In terms of biological role, cell division factor that enhances FtsZ-ring assembly. Directly interacts with FtsZ and promotes bundling of FtsZ protofilaments, with a reduction in FtsZ GTPase activity. This Shewanella oneidensis (strain ATCC 700550 / JCM 31522 / CIP 106686 / LMG 19005 / NCIMB 14063 / MR-1) protein is Cell division protein ZapD.